The primary structure comprises 20 residues: Elastase (20 aa).

A Peptidase S1 domain is found at 1-20; sequence VVGGEVARAHSWPWQISLQY.

This sequence belongs to the peptidase S1 family. Elastase subfamily.

Its function is as follows. Digests most rapidly at the C-terminal side of alanine residues, but also cleaves at valine and leucine residues. The protein is Elastase of Gadus morhua (Atlantic cod).